A 215-amino-acid polypeptide reads, in one-letter code: LexA repressor (215 aa).

A DNA-binding region (H-T-H motif) is located at residues 28 to 48; that stretch reads RAEIAAELGFSSPNAAEEHLR. Residues S133 and K170 each act as for autocatalytic cleavage activity in the active site.

The protein belongs to the peptidase S24 family. As to quaternary structure, homodimer.

It catalyses the reaction Hydrolysis of Ala-|-Gly bond in repressor LexA.. Its function is as follows. Represses a number of genes involved in the response to DNA damage (SOS response), including recA and lexA. In the presence of single-stranded DNA, RecA interacts with LexA causing an autocatalytic cleavage which disrupts the DNA-binding part of LexA, leading to derepression of the SOS regulon and eventually DNA repair. In Burkholderia vietnamiensis (strain G4 / LMG 22486) (Burkholderia cepacia (strain R1808)), this protein is LexA repressor.